The sequence spans 341 residues: Dihydroorotate dehydrogenase (quinone) (341 aa).

Residues 59 to 63 (AGLDK) and T83 contribute to the FMN site. K63 is a substrate binding site. A substrate-binding site is contributed by 108–112 (NRMGF). FMN-binding residues include N136 and N169. Residue N169 coordinates substrate. The Nucleophile role is filled by S172. Substrate is bound at residue N174. FMN is bound by residues K214 and T242. Residue 243–244 (NT) coordinates substrate. Residues G265, G294, and 315-316 (YS) contribute to the FMN site.

Belongs to the dihydroorotate dehydrogenase family. Type 2 subfamily. Monomer. FMN is required as a cofactor.

It is found in the cell membrane. The enzyme catalyses (S)-dihydroorotate + a quinone = orotate + a quinol. Its pathway is pyrimidine metabolism; UMP biosynthesis via de novo pathway; orotate from (S)-dihydroorotate (quinone route): step 1/1. Its function is as follows. Catalyzes the conversion of dihydroorotate to orotate with quinone as electron acceptor. This chain is Dihydroorotate dehydrogenase (quinone), found in Neisseria meningitidis serogroup C (strain 053442).